A 134-amino-acid chain; its full sequence is Small ribosomal subunit protein bS6 (134 aa).

This sequence belongs to the bacterial ribosomal protein bS6 family.

Binds together with bS18 to 16S ribosomal RNA. In Chlorobium phaeobacteroides (strain BS1), this protein is Small ribosomal subunit protein bS6.